The chain runs to 351 residues: Small ribosomal subunit biogenesis GTPase RsgA 1 (351 aa).

In terms of domain architecture, CP-type G spans 100–258; it reads LRTDAQIVAS…IIDTPGMREL (159 aa). GTP contacts are provided by residues 148–151 and 200–208; these read SKVD and GSSGAGKST. 4 residues coordinate Zn(2+): Cys282, Cys287, His289, and Cys295.

It belongs to the TRAFAC class YlqF/YawG GTPase family. RsgA subfamily. In terms of assembly, monomer. Associates with 30S ribosomal subunit, binds 16S rRNA. Zn(2+) is required as a cofactor.

It localises to the cytoplasm. Functionally, one of several proteins that assist in the late maturation steps of the functional core of the 30S ribosomal subunit. Helps release RbfA from mature subunits. May play a role in the assembly of ribosomal proteins into the subunit. Circularly permuted GTPase that catalyzes slow GTP hydrolysis, GTPase activity is stimulated by the 30S ribosomal subunit. In Oceanobacillus iheyensis (strain DSM 14371 / CIP 107618 / JCM 11309 / KCTC 3954 / HTE831), this protein is Small ribosomal subunit biogenesis GTPase RsgA 1.